The primary structure comprises 123 residues: Small ribosomal subunit protein uS12 (123 aa).

Residue aspartate 89 is modified to 3-methylthioaspartic acid. The tract at residues 100-123 is disordered; it reads GSLDTSGVKGRNQGRSKYGTKKPK. The segment covering 111-123 has biased composition (basic residues); sequence NQGRSKYGTKKPK.

The protein belongs to the universal ribosomal protein uS12 family. Part of the 30S ribosomal subunit. Contacts proteins S8 and S17. May interact with IF1 in the 30S initiation complex.

In terms of biological role, with S4 and S5 plays an important role in translational accuracy. Functionally, interacts with and stabilizes bases of the 16S rRNA that are involved in tRNA selection in the A site and with the mRNA backbone. Located at the interface of the 30S and 50S subunits, it traverses the body of the 30S subunit contacting proteins on the other side and probably holding the rRNA structure together. The combined cluster of proteins S8, S12 and S17 appears to hold together the shoulder and platform of the 30S subunit. The polypeptide is Small ribosomal subunit protein uS12 (Pseudomonas syringae pv. syringae (strain B728a)).